Consider the following 600-residue polypeptide: NADH-quinone oxidoreductase subunit C/D (600 aa).

An NADH dehydrogenase I subunit C region spans residues Met1–Gln190. Positions Asp214–Arg600 are NADH dehydrogenase I subunit D.

This sequence in the N-terminal section; belongs to the complex I 30 kDa subunit family. In the C-terminal section; belongs to the complex I 49 kDa subunit family. NDH-1 is composed of 13 different subunits. Subunits NuoB, CD, E, F, and G constitute the peripheral sector of the complex.

The protein localises to the cell inner membrane. The catalysed reaction is a quinone + NADH + 5 H(+)(in) = a quinol + NAD(+) + 4 H(+)(out). NDH-1 shuttles electrons from NADH, via FMN and iron-sulfur (Fe-S) centers, to quinones in the respiratory chain. The immediate electron acceptor for the enzyme in this species is believed to be ubiquinone. Couples the redox reaction to proton translocation (for every two electrons transferred, four hydrogen ions are translocated across the cytoplasmic membrane), and thus conserves the redox energy in a proton gradient. The sequence is that of NADH-quinone oxidoreductase subunit C/D from Escherichia coli O127:H6 (strain E2348/69 / EPEC).